The chain runs to 257 residues: MRPTMVAGNWKMNGLSGDAVHLTQAILHAGLEPMRPEVVIFPPFTLLHAVSQEAKSSALRWGGQNLFWEASGAYTGEISGAMLRDMGCRYVLIGHSERRQIFAESDAQIVQKIKAALLSGLIPVVCVGETEAERAQGLTDAVLRRQLEAVLPLLNLEASQPNLIIAYEPVWAIGTGLSASPEQAQAVHVFIRELAAAYSAQLARRLLLLYGGSVKGNNAAALFDQADIDGALVGGASLQAGEFIQICRAAESAGRGG.

Substrate is bound at residue 9–11; that stretch reads NWK. The Electrophile role is filled by His95. Glu168 serves as the catalytic Proton acceptor. Residues Gly174, Ser213, and 234–235 contribute to the substrate site; that span reads GG.

This sequence belongs to the triosephosphate isomerase family. As to quaternary structure, homodimer.

The protein resides in the cytoplasm. The catalysed reaction is D-glyceraldehyde 3-phosphate = dihydroxyacetone phosphate. It participates in carbohydrate biosynthesis; gluconeogenesis. Its pathway is carbohydrate degradation; glycolysis; D-glyceraldehyde 3-phosphate from glycerone phosphate: step 1/1. Its function is as follows. Involved in the gluconeogenesis. Catalyzes stereospecifically the conversion of dihydroxyacetone phosphate (DHAP) to D-glyceraldehyde-3-phosphate (G3P). The polypeptide is Triosephosphate isomerase (Acidithiobacillus ferrooxidans (strain ATCC 23270 / DSM 14882 / CIP 104768 / NCIMB 8455) (Ferrobacillus ferrooxidans (strain ATCC 23270))).